The following is a 21-amino-acid chain: Peptide PGLa-R5 (21 aa).

Leucine amide is present on Leu-21.

Expressed by the skin glands.

Its subcellular location is the secreted. Antimicrobial peptide. This Xenopus ruwenzoriensis (Uganda clawed frog) protein is Peptide PGLa-R5.